Consider the following 190-residue polypeptide: Adenylate kinase (190 aa).

10–15 is a binding site for ATP; it reads AAGKGT. The NMP stretch occupies residues 30–59; that stretch reads STGDMLRAAIASGSELGQRVSGIMERGELV. AMP is bound by residues T31, R36, 57–59, 85–88, and Q92; these read ELV and GFPR. The segment at 126 to 136 is LID; the sequence is GRFAESGRADD. An ATP-binding site is contributed by R127. AMP-binding residues include R133 and R144. G172 is a binding site for ATP.

It belongs to the adenylate kinase family. In terms of assembly, monomer.

It is found in the cytoplasm. The enzyme catalyses AMP + ATP = 2 ADP. Its pathway is purine metabolism; AMP biosynthesis via salvage pathway; AMP from ADP: step 1/1. Its function is as follows. Catalyzes the reversible transfer of the terminal phosphate group between ATP and AMP. Plays an important role in cellular energy homeostasis and in adenine nucleotide metabolism. The protein is Adenylate kinase of Phenylobacterium zucineum (strain HLK1).